The sequence spans 552 residues: Tyrosine-protein kinase Src64B (552 aa).

The 62-residue stretch at V95–S156 folds into the SH3 domain. The region spanning W162–C259 is the SH2 domain. Positions I284 to E537 constitute a Protein kinase domain. Residues L290–V298 and K312 contribute to the ATP site. D404 acts as the Proton acceptor in catalysis. A Phosphotyrosine; by autocatalysis modification is found at Y434.

It belongs to the protein kinase superfamily. Tyr protein kinase family. SRC subfamily. Interacts with hzg. Post-translationally, phosphorylated. In terms of tissue distribution, after the first 8 hours of development, accumulates almost exclusively in neural tissues such as the brain, ventral nerve chord, and eye-antennal disks, and in differentiating smooth muscle.

It catalyses the reaction L-tyrosyl-[protein] + ATP = O-phospho-L-tyrosyl-[protein] + ADP + H(+). Tyrosine-protein kinase that may play a role in the development of neural tissue and smooth muscle. May contribute to tyrosine phosphorylation of Dscam1, a cell surface receptor involved in targeting of growing axons during eye morphogenesis. The polypeptide is Tyrosine-protein kinase Src64B (Src64B) (Drosophila melanogaster (Fruit fly)).